The sequence spans 434 residues: Trigger factor (434 aa).

In terms of domain architecture, PPIase FKBP-type spans 160–245 (GDKVKMNFVG…LTEVQAANLP (86 aa)).

The protein belongs to the FKBP-type PPIase family. Tig subfamily.

Its subcellular location is the cytoplasm. The catalysed reaction is [protein]-peptidylproline (omega=180) = [protein]-peptidylproline (omega=0). Involved in protein export. Acts as a chaperone by maintaining the newly synthesized protein in an open conformation. Functions as a peptidyl-prolyl cis-trans isomerase. This Shewanella putrefaciens (strain CN-32 / ATCC BAA-453) protein is Trigger factor.